Here is a 1402-residue protein sequence, read N- to C-terminus: DNA-directed RNA polymerase subunit beta' (1402 aa).

Zn(2+) contacts are provided by Cys-71, Cys-73, Cys-86, and Cys-89. Positions 462, 464, and 466 each coordinate Mg(2+). Positions 808, 881, 888, and 891 each coordinate Zn(2+).

The protein belongs to the RNA polymerase beta' chain family. As to quaternary structure, the RNAP catalytic core consists of 2 alpha, 1 beta, 1 beta' and 1 omega subunit. When a sigma factor is associated with the core the holoenzyme is formed, which can initiate transcription. Mg(2+) serves as cofactor. The cofactor is Zn(2+).

The catalysed reaction is RNA(n) + a ribonucleoside 5'-triphosphate = RNA(n+1) + diphosphate. In terms of biological role, DNA-dependent RNA polymerase catalyzes the transcription of DNA into RNA using the four ribonucleoside triphosphates as substrates. The chain is DNA-directed RNA polymerase subunit beta' from Hyphomonas neptunium (strain ATCC 15444).